Here is a 141-residue protein sequence, read N- to C-terminus: 3-hydroxyacyl-[acyl-carrier-protein] dehydratase FabZ (141 aa).

His-47 is an active-site residue.

This sequence belongs to the thioester dehydratase family. FabZ subfamily.

It localises to the cytoplasm. It catalyses the reaction a (3R)-hydroxyacyl-[ACP] = a (2E)-enoyl-[ACP] + H2O. Functionally, involved in unsaturated fatty acids biosynthesis. Catalyzes the dehydration of short chain beta-hydroxyacyl-ACPs and long chain saturated and unsaturated beta-hydroxyacyl-ACPs. This is 3-hydroxyacyl-[acyl-carrier-protein] dehydratase FabZ from Caldanaerobacter subterraneus subsp. tengcongensis (strain DSM 15242 / JCM 11007 / NBRC 100824 / MB4) (Thermoanaerobacter tengcongensis).